We begin with the raw amino-acid sequence, 374 residues long: Protein FAM199X (374 aa).

Residues Tyr-238 to Lys-343 are disordered. The span at Ser-261–Thr-295 shows a compositional bias: low complexity. The segment covering Asp-315–Gln-334 has biased composition (basic residues). A coiled-coil region spans residues Lys-317–Leu-346.

This sequence belongs to the FAM199 family.

This Danio rerio (Zebrafish) protein is Protein FAM199X (fam199x).